A 376-amino-acid chain; its full sequence is MYKLLKKSGKARRGEFTTPHGVIQTPVFMNVGTLAAIKGAVSSMDLKEIGCQVELSNTYHLHLRPGDEVVKKMGGLHKFMNWDRPILTDSGGFQVFSLSKIRKIQEEGVYFNSHIDGRKIFMGPEESMRIQSNLASTIAMAFDECVENPAPREYVEKSVERTTRWLHRCKDEMNRLNSLPDTINNKQMLFGINQGGTYEDIRIEHAKTIAKMDLDGYAIGGLAVGESHEDMYRIIDAVVPHLPEDKPIYLMGVGIPSNILEAVDRGVDFFDCVLPARNGRHAHVFTKEGKINLLNAKFELDDRPIDEGCQCPACKHYTRSYIRHLFKAKEMLAMRLCVLHNLYFYNNLMEEIRDAIDGDYFKEYKERKLKEWGGRA.

D89 serves as the catalytic Proton acceptor. Substrate-binding positions include 89-93, D143, Q194, and G221; that span reads DSGGF. Residues 252–258 are RNA binding; it reads GVGIPSN. The active-site Nucleophile is D271. The tract at residues 276–280 is RNA binding; important for wobble base 34 recognition; that stretch reads ARNGR. 4 residues coordinate Zn(2+): C309, C311, C314, and H340.

Belongs to the queuine tRNA-ribosyltransferase family. As to quaternary structure, homodimer. Within each dimer, one monomer is responsible for RNA recognition and catalysis, while the other monomer binds to the replacement base PreQ1. It depends on Zn(2+) as a cofactor.

It catalyses the reaction 7-aminomethyl-7-carbaguanine + guanosine(34) in tRNA = 7-aminomethyl-7-carbaguanosine(34) in tRNA + guanine. Its pathway is tRNA modification; tRNA-queuosine biosynthesis. Functionally, catalyzes the base-exchange of a guanine (G) residue with the queuine precursor 7-aminomethyl-7-deazaguanine (PreQ1) at position 34 (anticodon wobble position) in tRNAs with GU(N) anticodons (tRNA-Asp, -Asn, -His and -Tyr). Catalysis occurs through a double-displacement mechanism. The nucleophile active site attacks the C1' of nucleotide 34 to detach the guanine base from the RNA, forming a covalent enzyme-RNA intermediate. The proton acceptor active site deprotonates the incoming PreQ1, allowing a nucleophilic attack on the C1' of the ribose to form the product. After dissociation, two additional enzymatic reactions on the tRNA convert PreQ1 to queuine (Q), resulting in the hypermodified nucleoside queuosine (7-(((4,5-cis-dihydroxy-2-cyclopenten-1-yl)amino)methyl)-7-deazaguanosine). This chain is Queuine tRNA-ribosyltransferase, found in Clostridium botulinum (strain Kyoto / Type A2).